Here is a 181-residue protein sequence, read N- to C-terminus: Small ribosomal subunit protein uS4 (181 aa).

Positions 104–172 (RRLQTIVYKK…SRPPVMSQQE (69 aa)) constitute an S4 RNA-binding domain.

It belongs to the universal ribosomal protein uS4 family. In terms of assembly, part of the 30S ribosomal subunit. Contacts protein S5. The interaction surface between S4 and S5 is involved in control of translational fidelity.

Functionally, one of the primary rRNA binding proteins, it binds directly to 16S rRNA where it nucleates assembly of the body of the 30S subunit. In terms of biological role, with S5 and S12 plays an important role in translational accuracy. The polypeptide is Small ribosomal subunit protein uS4 (Saccharolobus solfataricus (strain ATCC 35092 / DSM 1617 / JCM 11322 / P2) (Sulfolobus solfataricus)).